The following is a 329-amino-acid chain: Protein PRY2 (329 aa).

An N-terminal signal peptide occupies residues 1–18; it reads MKFSKVSLLAASASVALS. Residues 122-131 show a composition bias toward polar residues; the sequence is TSASATQDDV. The tract at residues 122 to 197 is disordered; it reads TSASATQDDV…SSSDFSTSMV (76 aa). Low complexity predominate over residues 132 to 190; the sequence is TTTLTSSTQPTSTTTPTTTTTSPTTTTSPTTTASPTTTASPTTATTTQSTASSTQSSSS. The SCP domain maps to 197–311; the sequence is VNEHNTKRAL…EWGDYIICSY (115 aa).

This sequence belongs to the CRISP family. O-glycosylated.

It is found in the secreted. Secreted protein required for efficient export of lipids such as acetylated sterols. Acts in detoxification of hydrophobic compounds. The chain is Protein PRY2 (PRY2) from Saccharomyces cerevisiae (strain ATCC 204508 / S288c) (Baker's yeast).